The following is a 346-amino-acid chain: 4-hydroxy-2-oxovalerate aldolase 2 (346 aa).

The Pyruvate carboxyltransferase domain maps to V8–Q260. R16–D17 is a binding site for substrate. Residue D17 coordinates Mn(2+). H20 functions as the Proton acceptor in the catalytic mechanism. S170 and H199 together coordinate substrate. Mn(2+) contacts are provided by H199 and H201. A substrate-binding site is contributed by Y290.

Belongs to the 4-hydroxy-2-oxovalerate aldolase family.

It catalyses the reaction (S)-4-hydroxy-2-oxopentanoate = acetaldehyde + pyruvate. The polypeptide is 4-hydroxy-2-oxovalerate aldolase 2 (bphX3) (Metapseudomonas furukawaii (Pseudomonas furukawaii)).